The following is a 316-amino-acid chain: Myb-related protein 306 (316 aa).

HTH myb-type domains are found at residues 9-65 (KIGV…RPGI) and 66-116 (KRGD…KKKL). DNA-binding regions (H-T-H motif) lie at residues 37 to 61 (WRAI…TNYL) and 89 to 112 (WAAI…NTHL). Disordered regions lie at residues 119-144 (LQSP…SKGQ), 168-193 (KTSS…QAST), and 209-230 (KKSP…TTTS). The span at 135–144 (DSDKSVSKGQ) shows a compositional bias: basic and acidic residues. A compositionally biased stretch (polar residues) spans 181 to 193 (VQTTQPRPFQAST). Residues 216-230 (SSTSQAGSSESTTTS) show a composition bias toward low complexity.

In terms of tissue distribution, expressed in flowers, leaves and weakly in seed pods.

It localises to the nucleus. Its function is as follows. Transcription factor. This chain is Myb-related protein 306, found in Antirrhinum majus (Garden snapdragon).